Here is a 296-residue protein sequence, read N- to C-terminus: tRNA pseudouridine synthase B (296 aa).

Catalysis depends on aspartate 38, which acts as the Nucleophile.

It belongs to the pseudouridine synthase TruB family. Type 1 subfamily.

It carries out the reaction uridine(55) in tRNA = pseudouridine(55) in tRNA. Responsible for synthesis of pseudouridine from uracil-55 in the psi GC loop of transfer RNAs. This Synechocystis sp. (strain ATCC 27184 / PCC 6803 / Kazusa) protein is tRNA pseudouridine synthase B.